A 134-amino-acid chain; its full sequence is Alkaline proteinase inhibitor (134 aa).

An N-terminal signal peptide occupies residues Met1 to Ala26. A disulfide bond links Cys50 and Cys73.

It belongs to the protease inhibitor I38 family.

It is found in the periplasm. In terms of biological role, inhibitor of the alkaline protease. The polypeptide is Alkaline proteinase inhibitor (inh) (Photorhabdus luminescens (Xenorhabdus luminescens)).